A 114-amino-acid chain; its full sequence is MLLKRLIKLAIFLFFVAVGFIIFIGSFWLNTYNTKEWANLLAEKDASGLIVQIIPNINQWFKGTVEQQQKLFQTLVHFFIPVGFGLLFGIAVAIIADLFYHLIKYLIKRSFKKN.

A run of 2 helical transmembrane segments spans residues 9-29 (LAIFLFFVAVGFIIFIGSFWL) and 75-95 (LVHFFIPVGFGLLFGIAVAII).

It is found in the cell membrane. This is an uncharacterized protein from Mycoplasma pneumoniae (strain ATCC 29342 / M129 / Subtype 1) (Mycoplasmoides pneumoniae).